Reading from the N-terminus, the 396-residue chain is Interleukin-3 receptor subunit alpha (396 aa).

The N-terminal stretch at 1–16 is a signal peptide; it reads MAANLWLILGLLASHS. Residues 17-331 are Extracellular-facing; the sequence is SDLAAVREAP…VCPPEVMPVK (315 aa). 5 disulfides stabilise this stretch: Cys-62/Cys-79, Cys-87/Cys-223, Cys-125/Cys-134, Cys-165/Cys-187, and Cys-245/Cys-323. Asn-91 is a glycosylation site (N-linked (GlcNAc...) asparagine). 4 N-linked (GlcNAc...) asparagine glycosylation sites follow: Asn-213, Asn-246, Asn-272, and Asn-283. Positions 312 to 316 match the WSXWS motif motif; it reads LSSWS. A helical membrane pass occupies residues 332–355; that stretch reads TALVTSVATVLGAGLVAAGLLLWW. The Cytoplasmic segment spans residues 356–396; that stretch reads RKSLLYRLCPPIPRLRLPLAGEMVVWEPALEDCEVTPVTDA. Residue Lys-357 forms a Glycyl lysine isopeptide (Lys-Gly) (interchain with G-Cter in ubiquitin) linkage. The Box 1 motif motif lies at 363–371; the sequence is LCPPIPRLR.

This sequence belongs to the type I cytokine receptor family. Type 5 subfamily. As to quaternary structure, interacts with IL3. Heterodimer of an alpha and a beta subunit. The beta subunit is common to the IL3, IL5 and GM-CSF receptors. Ubiquitinated at Lys-357 by RNFT2 in response to IL3. Ubiquitination leads ligand-induced degradation by the proteasome. Ubiquitinated by RNF128 via 'Lys-27'-linked polyubiquitination, facilitating its degradation through the lysosomal pathway.

It localises to the cell membrane. It is found in the endomembrane system. In terms of biological role, cell surface receptor for IL3 expressed on hematopoietic progenitor cells, monocytes and B-lymphocytes that controls the production and differentiation of hematopoietic progenitor cells into lineage-restricted cells. Ligand stimulation rapidly induces hetrodimerization with IL3RB, phosphorylation and enzyme activity of effector proteins such as JAK2 and PI3K that play a role in signaling cell proliferation and differentiation. Activation of JAK2 leads to STAT5-mediated transcriptional program. This chain is Interleukin-3 receptor subunit alpha (Il3ra), found in Mus musculus (Mouse).